A 427-amino-acid chain; its full sequence is Glutamate-1-semialdehyde 2,1-aminomutase (427 aa).

At Lys265 the chain carries N6-(pyridoxal phosphate)lysine.

This sequence belongs to the class-III pyridoxal-phosphate-dependent aminotransferase family. HemL subfamily. As to quaternary structure, homodimer. Requires pyridoxal 5'-phosphate as cofactor.

The protein resides in the cytoplasm. It carries out the reaction (S)-4-amino-5-oxopentanoate = 5-aminolevulinate. The protein operates within porphyrin-containing compound metabolism; protoporphyrin-IX biosynthesis; 5-aminolevulinate from L-glutamyl-tRNA(Glu): step 2/2. This is Glutamate-1-semialdehyde 2,1-aminomutase from Burkholderia thailandensis (strain ATCC 700388 / DSM 13276 / CCUG 48851 / CIP 106301 / E264).